Reading from the N-terminus, the 115-residue chain is Aspartate 1-decarboxylase (115 aa).

Catalysis depends on Ser24, which acts as the Schiff-base intermediate with substrate; via pyruvic acid. Position 24 is a pyruvic acid (Ser) (Ser24). Thr56 contributes to the substrate binding site. Catalysis depends on Tyr57, which acts as the Proton donor. Gly72 to Ala74 provides a ligand contact to substrate.

Belongs to the PanD family. As to quaternary structure, heterooctamer of four alpha and four beta subunits. Pyruvate is required as a cofactor. In terms of processing, is synthesized initially as an inactive proenzyme, which is activated by self-cleavage at a specific serine bond to produce a beta-subunit with a hydroxyl group at its C-terminus and an alpha-subunit with a pyruvoyl group at its N-terminus.

The protein resides in the cytoplasm. It catalyses the reaction L-aspartate + H(+) = beta-alanine + CO2. It participates in cofactor biosynthesis; (R)-pantothenate biosynthesis; beta-alanine from L-aspartate: step 1/1. Functionally, catalyzes the pyruvoyl-dependent decarboxylation of aspartate to produce beta-alanine. The chain is Aspartate 1-decarboxylase from Pseudothermotoga lettingae (strain ATCC BAA-301 / DSM 14385 / NBRC 107922 / TMO) (Thermotoga lettingae).